Here is a 459-residue protein sequence, read N- to C-terminus: Ribulose bisphosphate carboxylase large chain (459 aa).

Substrate contacts are provided by N98 and T148. K150 serves as the catalytic Proton acceptor. Substrate is bound at residue K152. The Mg(2+) site is built by K176, D178, and E179. K176 carries the N6-carboxylysine modification. Residue H268 is the Proton acceptor of the active site. 3 residues coordinate substrate: R269, H301, and S353.

Belongs to the RuBisCO large chain family. Type I subfamily. In terms of assembly, heterohexadecamer of 8 large chains and 8 small chains. Mg(2+) serves as cofactor.

The protein resides in the plastid. It localises to the chloroplast. The catalysed reaction is 2 (2R)-3-phosphoglycerate + 2 H(+) = D-ribulose 1,5-bisphosphate + CO2 + H2O. It carries out the reaction D-ribulose 1,5-bisphosphate + O2 = 2-phosphoglycolate + (2R)-3-phosphoglycerate + 2 H(+). Its function is as follows. RuBisCO catalyzes two reactions: the carboxylation of D-ribulose 1,5-bisphosphate, the primary event in carbon dioxide fixation, as well as the oxidative fragmentation of the pentose substrate in the photorespiration process. Both reactions occur simultaneously and in competition at the same active site. The protein is Ribulose bisphosphate carboxylase large chain (rbcL) of Calyptrosphaera sphaeroidea.